Reading from the N-terminus, the 334-residue chain is Ornithine carbamoyltransferase (334 aa).

Carbamoyl phosphate contacts are provided by residues 57–60 (STRT), Gln84, Arg108, and 135–138 (HPTQ). Residues Asn169, Asp233, and 237–238 (SM) each bind L-ornithine. Carbamoyl phosphate-binding positions include 275 to 276 (CL) and Arg320.

The protein belongs to the aspartate/ornithine carbamoyltransferase superfamily. OTCase family. In terms of assembly, homotrimer.

It localises to the cytoplasm. It carries out the reaction carbamoyl phosphate + L-ornithine = L-citrulline + phosphate + H(+). The protein operates within amino-acid biosynthesis; L-arginine biosynthesis; L-arginine from L-ornithine and carbamoyl phosphate: step 1/3. Functionally, reversibly catalyzes the transfer of the carbamoyl group from carbamoyl phosphate (CP) to the N(epsilon) atom of ornithine (ORN) to produce L-citrulline. This is Ornithine carbamoyltransferase from Vibrio vulnificus (strain CMCP6).